We begin with the raw amino-acid sequence, 432 residues long: Homeobox protein Hox-D3 (432 aa).

Disordered stretches follow at residues 43–62 (YSTP…LDTD), 68–197 (CSIQ…SKRV), 253–280 (QKAK…AGHV), and 400–432 (HHGP…LTHL). The span at 97–106 (NSQGGGGGSQ) shows a compositional bias: gly residues. Over residues 116–131 (PPQPPPPPPTLPPSSP) the composition is skewed to pro residues. Polar residues predominate over residues 148-158 (NASSSSATISK). The Antp-type hexapeptide signature appears at 160–165 (IFPWMK). Positions 194 to 253 (SKRVRTAYTSAQLVELEKEFHFNRYLCRPRRVEMANLLNLTERQIKIWFQNRRMKYKKDQ) form a DNA-binding region, homeobox.

The protein belongs to the Antp homeobox family.

The protein resides in the nucleus. Functionally, sequence-specific transcription factor which is part of a developmental regulatory system that provides cells with specific positional identities on the anterior-posterior axis. In Homo sapiens (Human), this protein is Homeobox protein Hox-D3 (HOXD3).